The sequence spans 329 residues: BRISC and BRCA1-A complex member 1 (329 aa).

Position 1 is an N-acetylmethionine (methionine 1). The tract at residues 1 to 84 is disordered; sequence MEVAEPSSPT…VPPPAPEVQI (84 aa). Phosphoserine is present on serine 8. Residues 10–19 are compositionally biased toward acidic residues; sequence TEEEEEEEEH. Phosphoserine occurs at positions 29, 49, 57, and 62. Threonine 65 bears the Phosphothreonine mark. The residue at position 66 (serine 66) is a Phosphoserine. The interval 95 to 298 is VWFA-like; it reads VIICLDLSEE…LELHNCMAKL (204 aa).

Belongs to the BABAM1 family. Component of the ARISC complex, at least composed of UIMC1/RAP80, ABRAXAS1, BRCC3/BRCC36, BABAM2 and BABAM1/NBA1. Component of the BRCA1-A complex, at least composed of BRCA1, BARD1, UIMC1/RAP80, ABRAXAS1, BRCC3/BRCC36, BABAM2 and BABAM1/NBA1. In the BRCA1-A complex, interacts directly with ABRAXAS1 and BABAM2. Component of the BRISC complex, at least composed of ABRAXAS2, BRCC3/BRCC36, BABAM2 and BABAM1/NBA1. Identified in a complex with SHMT2 and the other subunits of the BRISC complex.

It localises to the cytoplasm. The protein localises to the nucleus. In terms of biological role, component of the BRCA1-A complex, a complex that specifically recognizes 'Lys-63'-linked ubiquitinated histones H2A and H2AX at DNA lesions sites, leading to target the BRCA1-BARD1 heterodimer to sites of DNA damage at double-strand breaks (DSBs). The BRCA1-A complex also possesses deubiquitinase activity that specifically removes 'Lys-63'-linked ubiquitin on histones H2A and H2AX. In the BRCA1-A complex, it is required for the complex integrity and its localization at DSBs. Component of the BRISC complex, a multiprotein complex that specifically cleaves 'Lys-63'-linked ubiquitin in various substrates. In these 2 complexes, it is probably required to maintain the stability of BABAM2 and help the 'Lys-63'-linked deubiquitinase activity mediated by BRCC3/BRCC36 component. The BRISC complex is required for normal mitotic spindle assembly and microtubule attachment to kinetochores via its role in deubiquitinating NUMA1. Plays a role in interferon signaling via its role in the deubiquitination of the interferon receptor IFNAR1; deubiquitination increases IFNAR1 activity by enhancing its stability and cell surface expression. Down-regulates the response to bacterial lipopolysaccharide (LPS) via its role in IFNAR1 deubiquitination. The protein is BRISC and BRCA1-A complex member 1 (BABAM1) of Homo sapiens (Human).